The chain runs to 306 residues: Curved DNA-binding protein (306 aa).

The region spanning 5 to 69 (DYYAIMGVKP…QRRAEYDQMW (65 aa)) is the J domain.

The protein resides in the cytoplasm. Its subcellular location is the nucleoid. Functionally, DNA-binding protein that preferentially recognizes a curved DNA sequence. It is probably a functional analog of DnaJ; displays overlapping activities with DnaJ, but functions under different conditions, probably acting as a molecular chaperone in an adaptive response to environmental stresses other than heat shock. Lacks autonomous chaperone activity; binds native substrates and targets them for recognition by DnaK. Its activity is inhibited by the binding of CbpM. In Escherichia coli O7:K1 (strain IAI39 / ExPEC), this protein is Curved DNA-binding protein.